A 282-amino-acid polypeptide reads, in one-letter code: uncharacterized protein (282 aa).

This is an uncharacterized protein from Rickettsia conorii (strain ATCC VR-613 / Malish 7).